We begin with the raw amino-acid sequence, 50 residues long: Cytochrome c-555 (50 aa).

C7, C10, H11, and M25 together coordinate heme.

Post-translationally, binds 1 heme group per subunit.

It localises to the cell membrane. This Schinkia azotoformans (Bacillus azotoformans) protein is Cytochrome c-555.